The following is a 304-amino-acid chain: HPr kinase/phosphorylase (304 aa).

Catalysis depends on residues H136 and K157. ATP is bound at residue 151 to 158 (GESGIGKS). S158 serves as a coordination point for Mg(2+). Residue D175 is the Proton acceptor; for phosphorylation activity. Proton donor; for dephosphorylation activity of the active site. Residues 198–207 (LEVRGIGIID) are important for the catalytic mechanism of both phosphorylation and dephosphorylation. Residue E199 participates in Mg(2+) binding. R240 is a catalytic residue. Residues 261-266 (PVRPGR) are important for the catalytic mechanism of dephosphorylation.

The protein belongs to the HPrK/P family. As to quaternary structure, homohexamer. Mg(2+) serves as cofactor.

The enzyme catalyses [HPr protein]-L-serine + ATP = [HPr protein]-O-phospho-L-serine + ADP + H(+). The catalysed reaction is [HPr protein]-O-phospho-L-serine + phosphate + H(+) = [HPr protein]-L-serine + diphosphate. Catalyzes the ATP- as well as the pyrophosphate-dependent phosphorylation of a specific serine residue in HPr, a phosphocarrier protein of the phosphoenolpyruvate-dependent sugar phosphotransferase system (PTS). HprK/P also catalyzes the pyrophosphate-producing, inorganic phosphate-dependent dephosphorylation (phosphorolysis) of seryl-phosphorylated HPr (P-Ser-HPr). The two antagonistic activities of HprK/P are regulated by several intracellular metabolites, which change their concentration in response to the absence or presence of rapidly metabolisable carbon sources (glucose, fructose, etc.) in the growth medium. Therefore, by controlling the phosphorylation state of HPr, HPrK/P is a sensor enzyme that plays a major role in the regulation of carbon metabolism and sugar transport: it mediates carbon catabolite repression (CCR), and regulates PTS-catalyzed carbohydrate uptake and inducer exclusion. The sequence is that of HPr kinase/phosphorylase from Clostridium botulinum (strain Eklund 17B / Type B).